Reading from the N-terminus, the 387-residue chain is GTPase Obg (387 aa).

Residues 1-159 (MKFVDEAIIR…RSLKLELLLL (159 aa)) form the Obg domain. An OBG-type G domain is found at 160–333 (ADVGLLGMPN…LALKLLDFID (174 aa)). GTP-binding positions include 166–173 (GMPNAGKS), 191–195 (FTTLV), 213–216 (DIPG), 283–286 (NKAD), and 314–316 (SAY). The Mg(2+) site is built by S173 and T193.

Belongs to the TRAFAC class OBG-HflX-like GTPase superfamily. OBG GTPase family. Monomer. Mg(2+) serves as cofactor.

It is found in the cytoplasm. Functionally, an essential GTPase which binds GTP, GDP and possibly (p)ppGpp with moderate affinity, with high nucleotide exchange rates and a fairly low GTP hydrolysis rate. Plays a role in control of the cell cycle, stress response, ribosome biogenesis and in those bacteria that undergo differentiation, in morphogenesis control. The polypeptide is GTPase Obg (Shewanella pealeana (strain ATCC 700345 / ANG-SQ1)).